The sequence spans 70 residues: Beta-defensin 131B (70 aa).

A signal peptide spans 1–22; it reads MRVLFFVFGVLSLMSTVPPTRS. Cystine bridges form between Cys29-Cys56, Cys36-Cys50, and Cys40-Cys57.

The protein belongs to the beta-defensin family.

The protein resides in the secreted. Its function is as follows. Has antibacterial activity. This chain is Beta-defensin 131B, found in Homo sapiens (Human).